Here is a 448-residue protein sequence, read N- to C-terminus: Ribonuclease J (448 aa).

Zn(2+)-binding residues include histidine 81, histidine 83, aspartate 85, histidine 86, histidine 151, and aspartate 173. A substrate-binding site is contributed by 383 to 387 (HVSGH). Histidine 409 provides a ligand contact to Zn(2+).

The protein belongs to the metallo-beta-lactamase superfamily. RNA-metabolizing metallo-beta-lactamase-like family. Archaeal RNase J subfamily. As to quaternary structure, forms homodimers on heating to 60 degrees Celsius which may be the active form. It depends on Zn(2+) as a cofactor.

The protein localises to the cytoplasm. With respect to regulation, inhibited by imidazole. Its function is as follows. A 5'-3' exoribonuclease with a strong reference for 5'-monophosphorylated RNA and no endoribonuclease activty. Also has robust 5'-'3 nuclease activity on single-stranded DNA (exodeoxyribonuclease, exoDNase). May be involved in RNA degradation. This chain is Ribonuclease J, found in Methanocaldococcus jannaschii (strain ATCC 43067 / DSM 2661 / JAL-1 / JCM 10045 / NBRC 100440) (Methanococcus jannaschii).